Here is a 406-residue protein sequence, read N- to C-terminus: Tyrosine-protein phosphatase non-receptor type 2 (406 aa).

A Tyrosine-protein phosphatase domain is found at 5–275 (IEREFEELDA…RFSYMAIIEG (271 aa)). Tyr22 is modified (phosphotyrosine). At Ser52 the chain carries Phosphoserine. Position 68 is a phosphotyrosine (Tyr68). Substrate-binding positions include Asp182, 216–222 (CSAGIGR), and Gln260. Residue Cys216 is the Phosphocysteine intermediate of the active site. Cys216 is subject to S-nitrosocysteine. Phosphoserine occurs at positions 293, 298, 304, 320, and 339. The tract at residues 341-406 (ESILRKRIRE…ALVGWTLLFH (66 aa)) is endoplasmic reticulum location. A mediates interaction with STX17 region spans residues 371-406 (ERKRKRWLYWQPILTKMGFVSVILVGALVGWTLLFH).

This sequence belongs to the protein-tyrosine phosphatase family. Non-receptor class 1 subfamily. As to quaternary structure, interacts with RMDN3. Isoform 1 interacts with TMED9. Isoform 1 interacts with STX17; dephosphorylates STX17. Interacts with ITGA1 (via cytoplasmic domain); activates the phosphatase activity towards EGFR. Interacts with TRAF2; probably involved in tumor necrosis factor-mediated signaling. Interacts with MET. Interacts with FAM220A and STAT3; interaction with FAM220A promotes interaction of PTPN2 with transcriptional activator STAT3, leading to dephosphorylation of STAT3 by PTPN2 and negative regulation of STAT3 transcriptional activator activity. In terms of processing, specifically phosphorylated in a cell cycle-dependent manner by cyclin-dependent kinases CDK1 and CDK2. Probably activated through phosphorylation by PKR. As to expression, ubiquitously expressed. The highest expression levels were found in ovary, testis, thymus and kidney.

The protein localises to the endoplasmic reticulum. It is found in the endoplasmic reticulum-Golgi intermediate compartment. The protein resides in the nucleus. Its subcellular location is the cytoplasm. It localises to the cell membrane. The catalysed reaction is O-phospho-L-tyrosyl-[protein] + H2O = L-tyrosyl-[protein] + phosphate. Functionally, non-receptor type tyrosine-specific phosphatase that dephosphorylates receptor protein tyrosine kinases including INSR, EGFR, CSF1R, PDGFR. Also dephosphorylates non-receptor protein tyrosine kinases like JAK1, JAK2, JAK3, Src family kinases, STAT1, STAT3 and STAT6 either in the nucleus or the cytoplasm. Negatively regulates numerous signaling pathways and biological processes like hematopoiesis, inflammatory response, cell proliferation and differentiation, and glucose homeostasis. Plays a multifaceted and important role in the development of the immune system. Functions in T-cell receptor signaling through dephosphorylation of FYN and LCK to control T-cells differentiation and activation. Dephosphorylates CSF1R, negatively regulating its downstream signaling and macrophage differentiation. Negatively regulates cytokine (IL2/interleukin-2 and interferon)-mediated signaling through dephosphorylation of the cytoplasmic kinases JAK1, JAK3 and their substrate STAT1, that propagate signaling downstream of the cytokine receptors. Also regulates the IL6/interleukin-6 and IL4/interleukin-4 cytokine signaling through dephosphorylation of STAT3 and STAT6 respectively. In addition to the immune system, it is involved in anchorage-dependent, negative regulation of EGF-stimulated cell growth. Activated by the integrin ITGA1/ITGB1, it dephosphorylates EGFR and negatively regulates EGF signaling. Dephosphorylates PDGFRB and negatively regulates platelet-derived growth factor receptor-beta signaling pathway and therefore cell proliferation. Negatively regulates tumor necrosis factor-mediated signaling downstream via MAPK through SRC dephosphorylation. May also regulate the hepatocyte growth factor receptor signaling pathway through dephosphorylation of the hepatocyte growth factor receptor MET. Also plays an important role in glucose homeostasis. For instance, negatively regulates the insulin receptor signaling pathway through the dephosphorylation of INSR and control gluconeogenesis and liver glucose production through negative regulation of the IL6 signaling pathways. May also bind DNA. The polypeptide is Tyrosine-protein phosphatase non-receptor type 2 (Ptpn2) (Mus musculus (Mouse)).